Reading from the N-terminus, the 407-residue chain is Putative membrane protein 047R (407 aa).

The interval 265-337 (INCVFKPDPP…PPKPTPPPPI (73 aa)) is disordered. Positions 271 to 337 (PDPPPQPKPQ…PPKPTPPPPI (67 aa)) are enriched in pro residues. A run of 2 helical transmembrane segments spans residues 355 to 372 (NWIM…VIYP) and 385 to 403 (NAAI…QSYV).

The protein belongs to the IIV-6 337L family.

Its subcellular location is the virion membrane. The sequence is that of Putative membrane protein 047R from Aedes vexans (Inland floodwater mosquito).